Here is a 435-residue protein sequence, read N- to C-terminus: 5-methylthioadenosine/S-adenosylhomocysteine deaminase (435 aa).

Zn(2+) is bound by residues His65 and His67. Positions 94, 150, and 189 each coordinate substrate. Zn(2+) is bound at residue His216. The substrate site is built by Glu219 and Asp304. Asp304 is a binding site for Zn(2+).

The protein belongs to the metallo-dependent hydrolases superfamily. MTA/SAH deaminase family. Zn(2+) is required as a cofactor.

It catalyses the reaction S-adenosyl-L-homocysteine + H2O + H(+) = S-inosyl-L-homocysteine + NH4(+). The catalysed reaction is S-methyl-5'-thioadenosine + H2O + H(+) = S-methyl-5'-thioinosine + NH4(+). In terms of biological role, catalyzes the deamination of 5-methylthioadenosine and S-adenosyl-L-homocysteine into 5-methylthioinosine and S-inosyl-L-homocysteine, respectively. Is also able to deaminate adenosine. The protein is 5-methylthioadenosine/S-adenosylhomocysteine deaminase of Bacillus cereus (strain B4264).